A 171-amino-acid chain; its full sequence is 3-hydroxydecanoyl-[acyl-carrier-protein] dehydratase (171 aa).

His-70 is a catalytic residue.

The protein belongs to the thioester dehydratase family. FabA subfamily. Homodimer.

Its subcellular location is the cytoplasm. It catalyses the reaction a (3R)-hydroxyacyl-[ACP] = a (2E)-enoyl-[ACP] + H2O. The catalysed reaction is (3R)-hydroxydecanoyl-[ACP] = (2E)-decenoyl-[ACP] + H2O. The enzyme catalyses (2E)-decenoyl-[ACP] = (3Z)-decenoyl-[ACP]. Its pathway is lipid metabolism; fatty acid biosynthesis. Functionally, necessary for the introduction of cis unsaturation into fatty acids. Catalyzes the dehydration of (3R)-3-hydroxydecanoyl-ACP to E-(2)-decenoyl-ACP and then its isomerization to Z-(3)-decenoyl-ACP. Can catalyze the dehydratase reaction for beta-hydroxyacyl-ACPs with saturated chain lengths up to 16:0, being most active on intermediate chain length. The chain is 3-hydroxydecanoyl-[acyl-carrier-protein] dehydratase from Pseudomonas syringae pv. tomato (strain ATCC BAA-871 / DC3000).